Here is a 912-residue protein sequence, read N- to C-terminus: DNA ligase 4 (912 aa).

Residues E271, T272, K273, L274, R278, E331, K345, F367, E427, K432, K449, and K451 each contribute to the ATP site. K273 acts as the N6-AMP-lysine intermediate in catalysis. E331 contacts Mg(2+). E427 contacts Mg(2+). Residues 610–620 (LATKHLHVGDD) are required for catalytic activity. 2 consecutive BRCT domains span residues 654–743 (KVSN…PRFM) and 846–912 (LRFH…QYLL).

The protein belongs to the ATP-dependent DNA ligase family. Interacts with XRCC4; the LIG4-XRCC4 subcomplex has a 1:2 stoichiometry and XRCC4 is required for LIG4 stability. Component of the core long-range non-homologous end joining (NHEJ) complex (also named DNA-PK complex) composed of PRKDC, LIG4, XRCC4, XRCC6/Ku70, XRCC5/Ku86 and NHEJ1/XLF. Additional component of the NHEJ complex includes PAXX. Following autophosphorylation, PRKDC dissociates from DNA, leading to formation of the short-range NHEJ complex, composed of LIG4, XRCC4, XRCC6/Ku70, XRCC5/Ku86 and NHEJ1/XLF. Interacts with DCLRE1C; the interaction is direct. Interacts with APLF. Mg(2+) is required as a cofactor.

It is found in the nucleus. The catalysed reaction is ATP + (deoxyribonucleotide)n-3'-hydroxyl + 5'-phospho-(deoxyribonucleotide)m = (deoxyribonucleotide)n+m + AMP + diphosphate.. Functionally, DNA ligase involved in DNA non-homologous end joining (NHEJ); required for double-strand break (DSB) repair and V(D)J recombination. Catalyzes the NHEJ ligation step of the broken DNA during DSB repair by resealing the DNA breaks after the gap filling is completed. Joins single-strand breaks in a double-stranded polydeoxynucleotide in an ATP-dependent reaction. LIG4 is mechanistically flexible: it can ligate nicks as well as compatible DNA overhangs alone, while in the presence of XRCC4, it can ligate ends with 2-nucleotides (nt) microhomology and 1-nt gaps. Forms a subcomplex with XRCC4; the LIG4-XRCC4 subcomplex is responsible for the NHEJ ligation step and XRCC4 enhances the joining activity of LIG4. Binding of the LIG4-XRCC4 complex to DNA ends is dependent on the assembly of the DNA-dependent protein kinase complex DNA-PK to these DNA ends. LIG4 regulates nuclear localization of XRCC4. The polypeptide is DNA ligase 4 (Cricetulus griseus (Chinese hamster)).